We begin with the raw amino-acid sequence, 445 residues long: tRNA modification GTPase MnmE (445 aa).

(6S)-5-formyl-5,6,7,8-tetrahydrofolate contacts are provided by R20, E79, and K119. One can recognise a TrmE-type G domain in the interval 215-371 (GLKLAIIGPP…ILKNIENIAE (157 aa)). N225 serves as a coordination point for K(+). Residues 225–230 (NAGKSS), 244–250 (SNIAGTT), and 269–272 (DTAG) each bind GTP. Position 229 (S229) interacts with Mg(2+). K(+) is bound by residues S244, I246, and T249. T250 serves as a coordination point for Mg(2+). K445 provides a ligand contact to (6S)-5-formyl-5,6,7,8-tetrahydrofolate.

The protein belongs to the TRAFAC class TrmE-Era-EngA-EngB-Septin-like GTPase superfamily. TrmE GTPase family. In terms of assembly, homodimer. Heterotetramer of two MnmE and two MnmG subunits. K(+) serves as cofactor.

It is found in the cytoplasm. Its function is as follows. Exhibits a very high intrinsic GTPase hydrolysis rate. Involved in the addition of a carboxymethylaminomethyl (cmnm) group at the wobble position (U34) of certain tRNAs, forming tRNA-cmnm(5)s(2)U34. The sequence is that of tRNA modification GTPase MnmE from Rickettsia canadensis (strain McKiel).